The chain runs to 798 residues: Pre-mRNA-splicing factor SYF1 (798 aa).

HAT repeat units follow at residues 5-37 (KFVK…TKRS), 39-71 (GDEL…WRIE), 83-115 (DEYN…WVIQ), 117-151 (KDLK…FIIN), 392-424 (VYAD…LFEE), 428-460 (KSEV…YRLK), 478-514 (DNHE…LLEV), 516-548 (GNYG…LNES), 550-584 (GHQA…VALK), 587-622 (ITKE…FELN), 661-695 (LDVN…LEES), and 697-731 (NEVA…FETM).

It belongs to the crooked-neck family. In terms of assembly, associated with the spliceosome.

The protein localises to the nucleus. Involved in pre-mRNA splicing and cell cycle progression. The sequence is that of Pre-mRNA-splicing factor SYF1 (SYF1) from Kluyveromyces lactis (strain ATCC 8585 / CBS 2359 / DSM 70799 / NBRC 1267 / NRRL Y-1140 / WM37) (Yeast).